A 315-amino-acid polypeptide reads, in one-letter code: MSQPTPAVRTFQDLILALQNYWAAQGCVVLQPYDMEVGAGTFHTATFLRAVGPETWNAAYVQPSRRPADGRYGENPNRLQHYYQFQVVLKPNPANFQELYLGSLKAIGLDPLVHDIRFVEDNWESPTLGAWGLGWEIWLNGMEVTQFTYFQQVGGIECYPVTGEITYGLERLAMYIQGVDSVYDLVWADGPFGKVTYGDVFHQNEVEQSTYNFEHANVDKLFELFDFYESEANRLIKLELPLPTYEMVLKASHTFNLLDARRAISVTERQRYILRVRTLARDVAQSYLQARARLGFPMATPELRDEVLAKLEAAQ.

Belongs to the class-II aminoacyl-tRNA synthetase family. In terms of assembly, tetramer of two alpha and two beta subunits.

The protein localises to the cytoplasm. It carries out the reaction tRNA(Gly) + glycine + ATP = glycyl-tRNA(Gly) + AMP + diphosphate. In Pseudomonas putida (strain ATCC 47054 / DSM 6125 / CFBP 8728 / NCIMB 11950 / KT2440), this protein is Glycine--tRNA ligase alpha subunit.